Consider the following 108-residue polypeptide: uncharacterized protein (108 aa).

Transmembrane regions (helical) follow at residues Y32 to I52 and S68 to G88.

It localises to the membrane. This is an uncharacterized protein from Saccharomyces cerevisiae (strain ATCC 204508 / S288c) (Baker's yeast).